The sequence spans 334 residues: Phosphate acyltransferase (334 aa).

It belongs to the PlsX family. Homodimer. Probably interacts with PlsY.

The protein resides in the cytoplasm. It catalyses the reaction a fatty acyl-[ACP] + phosphate = an acyl phosphate + holo-[ACP]. It participates in lipid metabolism; phospholipid metabolism. Its function is as follows. Catalyzes the reversible formation of acyl-phosphate (acyl-PO(4)) from acyl-[acyl-carrier-protein] (acyl-ACP). This enzyme utilizes acyl-ACP as fatty acyl donor, but not acyl-CoA. This chain is Phosphate acyltransferase, found in Acholeplasma laidlawii (strain PG-8A).